The following is a 342-amino-acid chain: Methylthioribose-1-phosphate isomerase (342 aa).

Residues 49 to 51 (RGA), Arg86, and Gln187 each bind substrate. Residue Asp228 is the Proton donor of the active site. 238–239 (NK) contacts substrate.

The protein belongs to the eIF-2B alpha/beta/delta subunits family. MtnA subfamily.

It catalyses the reaction 5-(methylsulfanyl)-alpha-D-ribose 1-phosphate = 5-(methylsulfanyl)-D-ribulose 1-phosphate. It functions in the pathway amino-acid biosynthesis; L-methionine biosynthesis via salvage pathway; L-methionine from S-methyl-5-thio-alpha-D-ribose 1-phosphate: step 1/6. In terms of biological role, catalyzes the interconversion of methylthioribose-1-phosphate (MTR-1-P) into methylthioribulose-1-phosphate (MTRu-1-P). The chain is Methylthioribose-1-phosphate isomerase from Serratia proteamaculans (strain 568).